Here is an 88-residue protein sequence, read N- to C-terminus: Small ribosomal subunit protein uS17 (88 aa).

This sequence belongs to the universal ribosomal protein uS17 family. Part of the 30S ribosomal subunit.

One of the primary rRNA binding proteins, it binds specifically to the 5'-end of 16S ribosomal RNA. The polypeptide is Small ribosomal subunit protein uS17 (Synechococcus sp. (strain WH7803)).